We begin with the raw amino-acid sequence, 495 residues long: Monoamine oxidase N (495 aa).

The span at 1–19 (MTSRDGYQWTPETGLTQGV) shows a compositional bias: polar residues. Residues 1–23 (MTSRDGYQWTPETGLTQGVPSLG) form a disordered region. The Microbody targeting signal signature appears at 493–495 (ARL).

This sequence belongs to the flavin monoamine oxidase family. The cofactor is FAD.

The protein localises to the peroxisome. It carries out the reaction a secondary aliphatic amine + O2 + H2O = a primary amine + an aldehyde + H2O2. The chain is Monoamine oxidase N (maoN) from Aspergillus niger.